The following is a 494-amino-acid chain: Anthranilate synthase component 1 (494 aa).

L-tryptophan contacts are provided by residues serine 52 and 274 to 276 (PYM). 309–310 (GT) lines the chorismate pocket. Position 336 (glutamate 336) interacts with Mg(2+). Chorismate-binding positions include tyrosine 424, arginine 444, 458-460 (GAG), and glycine 460. Glutamate 473 is a Mg(2+) binding site.

The protein belongs to the anthranilate synthase component I family. In terms of assembly, heterotetramer consisting of two non-identical subunits: a beta subunit (TrpG) and a large alpha subunit (TrpE). Mg(2+) serves as cofactor.

It carries out the reaction chorismate + L-glutamine = anthranilate + pyruvate + L-glutamate + H(+). Its pathway is amino-acid biosynthesis; L-tryptophan biosynthesis; L-tryptophan from chorismate: step 1/5. Feedback inhibited by tryptophan. In terms of biological role, part of a heterotetrameric complex that catalyzes the two-step biosynthesis of anthranilate, an intermediate in the biosynthesis of L-tryptophan. In the first step, the glutamine-binding beta subunit (TrpG) of anthranilate synthase (AS) provides the glutamine amidotransferase activity which generates ammonia as a substrate that, along with chorismate, is used in the second step, catalyzed by the large alpha subunit of AS (TrpE) to produce anthranilate. In the absence of TrpG, TrpE can synthesize anthranilate directly from chorismate and high concentrations of ammonia. The protein is Anthranilate synthase component 1 (trpE) of Aquifex aeolicus (strain VF5).